Consider the following 85-residue polypeptide: Large ribosomal subunit protein bL31 (85 aa).

Residues 64–85 (KYGMSESQGAGGKGNAKKKDEK) form a disordered region.

The protein belongs to the bacterial ribosomal protein bL31 family. Type A subfamily. Part of the 50S ribosomal subunit.

Binds the 23S rRNA. The protein is Large ribosomal subunit protein bL31 of Acaryochloris marina (strain MBIC 11017).